A 296-amino-acid polypeptide reads, in one-letter code: 33 kDa chaperonin (296 aa).

Disulfide bonds link Cys238–Cys240 and Cys271–Cys274.

Belongs to the HSP33 family. Under oxidizing conditions two disulfide bonds are formed involving the reactive cysteines. Under reducing conditions zinc is bound to the reactive cysteines and the protein is inactive.

The protein resides in the cytoplasm. In terms of biological role, redox regulated molecular chaperone. Protects both thermally unfolding and oxidatively damaged proteins from irreversible aggregation. Plays an important role in the bacterial defense system toward oxidative stress. This Clostridium botulinum (strain Okra / Type B1) protein is 33 kDa chaperonin.